Here is a 377-residue protein sequence, read N- to C-terminus: 2-aminoethylphosphonate--pyruvate transaminase (377 aa).

At Lys-194 the chain carries N6-(pyridoxal phosphate)lysine.

It belongs to the class-V pyridoxal-phosphate-dependent aminotransferase family. PhnW subfamily. Homodimer. Requires pyridoxal 5'-phosphate as cofactor.

It catalyses the reaction (2-aminoethyl)phosphonate + pyruvate = phosphonoacetaldehyde + L-alanine. In terms of biological role, involved in phosphonate degradation. The sequence is that of 2-aminoethylphosphonate--pyruvate transaminase from Cupriavidus necator (strain ATCC 17699 / DSM 428 / KCTC 22496 / NCIMB 10442 / H16 / Stanier 337) (Ralstonia eutropha).